We begin with the raw amino-acid sequence, 365 residues long: MSSTMRGWVRQHRGPYESSLKLIDSLPVPPDPGSDSSDIIVRVSYVALEFSIAHIMGIFPALPFAPPLVPEICVSGTVASAGGKAPEELRQPGTQVLAMTDPMSMMLFGTGALKEYMRLPEQYVVPLLQPSHSVTTDHPHGTAERPQALTLAEGAGLISNGSAAQAVVRAANVLSGQRVLVNGASGSVGHIVSQLCRARGAYVVGVASGVNQDFVRRYGCNEFVDYTKHTDLPEYLASTYGSQPFDSILDCVGSQDLYANSPRYLLPGRPLVNIGAFSMTDSLLSTLYQWSMNSWCPTWLGGVPRPYILFSNTPDMQGVLSLVEMVQQGKLKVHIDSEFEMEDLIKAYERVTSKRARGKVLIRIH.

Residues 21-362 (KLIDSLPVPP…SKRARGKVLI (342 aa)) form the Enoyl reductase (ER) domain. NADP(+)-binding positions include 185–188 (SGSV), Tyr226, 274–275 (IG), and 354–355 (KR).

The protein belongs to the zinc-containing alcohol dehydrogenase family. As to quaternary structure, monomer.

It participates in mycotoxin biosynthesis. Its function is as follows. Medium chain reductase; part of the gene cluster that mediates the biosynthesis of pyrrocidines, fungal natural products containing a macrocyclic para-cyclophane connected to a decahydrofluorene ring system that show potent antibiotic activities toward Gram-negative bacteria. Within the pathway, pydE functions synergistically with pydB, pydX and pydZ to form the cyclophane. The pathway begins with the PKS-NRPS pydA which, with the help of the trans-enoyl reductase pydC, synthesizes the polyketide-tyrosyl acyl thioester product which can be reductively off-loaded by the terminal reductase (R) domain in pydA. The alpha/beta hydrolase pydG is then required to catalyze the subsequent Knoevenagel condensation that affords the 3-pyrrolin-2-one ring, whereas the four proteins pydB, pydE, pydX and pydZ then function synergistically to form the cyclophane. PydB and the membrane-bound pydX and pydZ are lipid-binding proteins that can sequester and mold the pdyG product into the inverse S-shape. Binding of the medium chain reductase pydE to the complex would trigger the cascade oxidative cyclization. PydY is involved in the Diels-Alder cycloaddition that forms the decahydrofluorene core. Additional non-enzymatic hydroxylation yields pyrrocidine A2 which can be further reduced into pyrrocidine B by an endogenous reductase. The polypeptide is Medium chain reductase pydE (Acremonium sp).